The chain runs to 385 residues: Phosphotransferase FrzJ (385 aa).

Positions 38 and 59 each coordinate ATP. Asp245 is a catalytic residue.

This sequence belongs to the methylthioribose kinase family. In terms of assembly, monomer.

The catalysed reaction is (1S,3S,6S,7S,8S,9S)-6-[(4-methoxyphenyl)methyl]-3-(methylamino)-5-azatricyclo[6.3.1.0(1,5)]dodecane-7,9-diol + ATP = (-)-FR901483 + ADP + 2 H(+). The protein operates within secondary metabolite biosynthesis. Phosphotransferase; part of the gene cluster that mediates the biosynthesis of the alkaloid (-)-FR901483, a potent immunosuppressant that shows efficacy in animal models and a probable inhibitor of purine nucleotide biosynthesis by targeting phosphoribosylpyrophosphate amidotransferase (PPAT). FrzJ catalyzes the last step of the pathway by phosphorylating the C4'-OH of dephospho-(-)-FR901483 to produce (-)-FR901483. The biosynthesis of (-)-FR901483 starts with the condensation of two L-tyrosines to yield (S,S)-dityrosyl-piperazine. This process occurs in 3 steps with the non-canonical nonribosomal peptide synthetase FrzA catalyzing the reduction of L-tyrosine into L-tyrosinal, the spontaneous condensation of 2 L-tyrosinal units, and the subsequent reduction by the NmrA-like family domain-containing oxidoreductase FrzB. The cytochrome P450 monooxygenase FrzC then performs coupling between N10 and C1' to morph the piperazine into a 1,4-diazabicyclo[3.2.1]octane spiro-fused to a 2,5-cyclohexadienone. The dienone portion is further reduced to cyclohexanone by the flavin-dependent reductase FrzD. The methyltranserases (MTs) FrzE and FrzF are then involved in the methylation at the C10' amine and the C4 phenolic oxygen, respectively. The order of the two MTs appear to be interchangeable. Cleavage of the C9-N10' bond by the dioxygenase FrzG then leads to formation of a conjugated iminium. In addition to the oxidation of C9, an additional dehydrogenation between C7 and C8 can occur to give a likely shunt product. The next biosynthetic step is the intramolecular aldol condensation catalyzed by the newly identified aldolase FrzH to yield an aza-tricyclic product with the formation of a C9-C3' bond. The short-chain dehydrogenase/reductase FrzI then produces dephospho-(-)-FR901483 that is phosphorylated at C4'-OH into (-)-FR901483 by the phosphotransferase FrzJ. The polypeptide is Phosphotransferase FrzJ (Cladobotryum sp).